The following is a 484-amino-acid chain: MKRNNLSSFYVSLWLLFTATMLQAVESAKGKYAQMLFNELFEDYSNALRPVEDTDKVLNVTLQITLSQIKDMDERNQILTAYLWIRQSWYDAYLKWDKDKYDGLDSIRIPSNLVWRPDIVLYNKADDDFSEPVNTNVVLRYDGKITWDAPAITKSSCVVDVSYFPFDSQQCNLTFGSWTYNGNQVDIINSLDSGDLSDFVEDVEWEIHGMPAVKNVITYGCCSEPYPDVTFTLILKRKSSFYIFNLLLPCILISFLAPLGFYLPADSGEKVSLGVTVLLALTVFQLMVAEIMPPSENVPLIGKYYIATMTMITASTALTIIIMNVHHCGSEAKPVPQWARVVILDYMSKIFFVYDVGENCTSPRREKEQEHRLEGGDMCRGGDGKSHLSSRNDDSDLKENLNGNWNKSFGVHGENVRENVNCCSCYKMLIKNIEYIANCVRDHKANRAKGIEWKKVAKVMDRFFMWIFFIMVFFMSVLIIGKAA.

Positions 1 to 27 (MKRNNLSSFYVSLWLLFTATMLQAVES) are cleaved as a signal peptide. Residues 28 to 240 (AKGKYAQMLF…FTLILKRKSS (213 aa)) are Extracellular-facing. N-linked (GlcNAc...) asparagine glycosylation is present at asparagine 59. Cysteine 157 and cysteine 171 are oxidised to a cystine. Asparagine 172 carries N-linked (GlcNAc...) asparagine glycosylation. The Na(+) site is built by serine 193 and aspartate 195. Cysteine 221 and cysteine 222 form a disulfide bridge. The next 3 membrane-spanning stretches (helical) occupy residues 241–261 (FYIF…PLGF), 271–291 (VSLG…VAEI), and 305–325 (YIAT…IMNV). At 326–462 (HHCGSEAKPV…WKKVAKVMDR (137 aa)) the chain is on the cytoplasmic side. A disordered region spans residues 364-395 (RREKEQEHRLEGGDMCRGGDGKSHLSSRNDDS). Residues 463 to 483 (FFMWIFFIMVFFMSVLIIGKA) traverse the membrane as a helical segment.

Belongs to the ligand-gated ion channel (TC 1.A.9) family. Acetylcholine receptor (TC 1.A.9.1) subfamily. Alpha-9/CHRNA9 sub-subfamily. In terms of assembly, forms homo- or heteropentameric channels in conjunction with CHRNA10. The native outer hair cell receptor is composed of CHRNA9:CHRNA10 heterooligomers. Found in the stoichiometric form (CHRNA9)2:(CHRNA10)3. As to expression, expressed in hair cells of the cochlea (at protein level). Expressed in hair cells of the cochlea.

It localises to the synaptic cell membrane. The protein localises to the cell membrane. It carries out the reaction Ca(2+)(in) = Ca(2+)(out). It catalyses the reaction K(+)(in) = K(+)(out). The enzyme catalyses Na(+)(in) = Na(+)(out). The catalysed reaction is Mg(2+)(in) = Mg(2+)(out). Activated by a myriad of ligands such as acetylcholine. AChR activity is inhibited by the antagonist alpha-conotoxins RgIA and GeXXA, small disulfide-constrained peptides from cone snails. Functionally, component of neuronal acetylcholine receptors (nAChRs) that function as pentameric, ligand-gated cation channels with high calcium permeability among other activities. nAChRs are excitatory neurotrasnmitter receptors formed by a collection of nAChR subunits known to mediate synaptic transmission in the nervous system and the neuromuscular junction. Each nAchR subunit confers differential attributes to channel properties, including activation, deactivation and desensitization kinetics, pH sensitivity, cation permeability, and binding to allosteric modulators. Forms either homopentamers or heteropentamers with CHRNA10. Expressed in the inner ear, in sympathetic neurons and in other non-neuronal cells, such as skin keratinocytes and lymphocytes. The channel is permeable to a range of divalent cations including calcium, the influx of which may activate a potassium current which hyperpolarizes the cell membrane. The chain is Neuronal acetylcholine receptor subunit alpha-9 (CHRNA9) from Gallus gallus (Chicken).